A 489-amino-acid polypeptide reads, in one-letter code: Rhamnulokinase (489 aa).

Alanine 13–arginine 17 contributes to the ATP binding site. A disulfide bond links cysteine 68 and cysteine 222. Substrate contacts are provided by residues glycine 83 and histidine 236–threonine 238. The active-site Proton acceptor is aspartate 237. Residue threonine 259 participates in ATP binding. Asparagine 296 is a binding site for substrate. Glutamine 304 contributes to the ATP binding site. An intrachain disulfide couples cysteine 353 to cysteine 370. Glycine 402 provides a ligand contact to ATP. A disulfide bridge links cysteine 413 with cysteine 417.

The protein belongs to the rhamnulokinase family. As to quaternary structure, monomer. Requires Mg(2+) as cofactor.

The enzyme catalyses L-rhamnulose + ATP = L-rhamnulose 1-phosphate + ADP + H(+). Its pathway is carbohydrate degradation; L-rhamnose degradation; glycerone phosphate from L-rhamnose: step 2/3. Functionally, involved in the catabolism of L-rhamnose (6-deoxy-L-mannose). Catalyzes the transfer of the gamma-phosphate group from ATP to the 1-hydroxyl group of L-rhamnulose to yield L-rhamnulose 1-phosphate. This chain is Rhamnulokinase, found in Escherichia coli (strain K12 / DH10B).